The sequence spans 420 residues: ATP phosphoribosyltransferase regulatory subunit (420 aa).

The protein belongs to the class-II aminoacyl-tRNA synthetase family. HisZ subfamily. As to quaternary structure, heteromultimer composed of HisG and HisZ subunits.

The protein localises to the cytoplasm. Its pathway is amino-acid biosynthesis; L-histidine biosynthesis; L-histidine from 5-phospho-alpha-D-ribose 1-diphosphate: step 1/9. Functionally, required for the first step of histidine biosynthesis. May allow the feedback regulation of ATP phosphoribosyltransferase activity by histidine. This Bacillus cereus (strain G9842) protein is ATP phosphoribosyltransferase regulatory subunit.